A 919-amino-acid chain; its full sequence is Isoleucine--tRNA ligase (919 aa).

The 'HIGH' region signature appears at 57-67 (PYANGHIHIGT). Glu-553 serves as a coordination point for L-isoleucyl-5'-AMP. The short motif at 594 to 598 (KMSKS) is the 'KMSKS' region element. Lys-597 contacts ATP. The Zn(2+) site is built by Cys-887, Cys-890, Cys-907, and Cys-910.

It belongs to the class-I aminoacyl-tRNA synthetase family. IleS type 1 subfamily. In terms of assembly, monomer. Requires Zn(2+) as cofactor.

It localises to the cytoplasm. It carries out the reaction tRNA(Ile) + L-isoleucine + ATP = L-isoleucyl-tRNA(Ile) + AMP + diphosphate. Its function is as follows. Catalyzes the attachment of isoleucine to tRNA(Ile). As IleRS can inadvertently accommodate and process structurally similar amino acids such as valine, to avoid such errors it has two additional distinct tRNA(Ile)-dependent editing activities. One activity is designated as 'pretransfer' editing and involves the hydrolysis of activated Val-AMP. The other activity is designated 'posttransfer' editing and involves deacylation of mischarged Val-tRNA(Ile). The polypeptide is Isoleucine--tRNA ligase (Thermotoga maritima (strain ATCC 43589 / DSM 3109 / JCM 10099 / NBRC 100826 / MSB8)).